We begin with the raw amino-acid sequence, 129 residues long: MARVKRAVNAHKKRRSILKASRGYRGQRSRLYRKAKEQQLHSLNYAYRDRRARKGEFRKLWIARINAAARLNDITYNRLIQGLKAAGVEVDRKNLADIAISDPAAFTALVDVARAALPEDVNAPSGEAA.

The protein belongs to the bacterial ribosomal protein bL20 family.

Binds directly to 23S ribosomal RNA and is necessary for the in vitro assembly process of the 50S ribosomal subunit. It is not involved in the protein synthesizing functions of that subunit. This chain is Large ribosomal subunit protein bL20, found in Mycobacterium tuberculosis (strain ATCC 25177 / H37Ra).